The chain runs to 844 residues: Receptor-like protein 49 (844 aa).

Positions 1–31 (MMYSCRERRMITVKWSLCLIFCLSNSILVFA) are cleaved as a signal peptide. The Extracellular portion of the chain corresponds to 32–803 (KHLCLPDQRD…QDEEKEEEEQ (772 aa)). Residues Asn-59, Asn-95, Asn-112, and Asn-159 are each glycosylated (N-linked (GlcNAc...) asparagine). LRR repeat units lie at residues 102 to 126 (QHLQKLYLGCNTSFGSLSYNDGLKG), 136 to 160 (LKYLKVLSLRGCNLFGKIPSSLGNL), 161 to 183 (SYLTHLDLSFNDFTGVIPDSMGN), 185 to 208 (NYLRVLNLGKCNFYGKVPSSLGNL), 209 to 231 (SYLAQLDLSYNDFTREGPDSMGN), 242 to 265 (LNSLTDIDLGSNQLKGMLPSNMSS), 266 to 290 (LSKLEYFYIGGNSFSGSIPSSLFMI), 292 to 313 (SLVELDLQRNHFSALEIGNISS), 315 to 339 (SKLQVLILGGNNFNPDIVDLSIFSP), 345 to 362 (YLDVSGINLKISSTVSLP), 363 to 385 (SPIEYLVLSSCNISEFPKFLRNQ), 386 to 409 (TKLYSLDISANQIEGQVPEWLWSL), 410 to 434 (PELQSINISHNSFNGFEGPADVIQG), 436 to 457 (GELYMLDISSNIFQDPFPLLPV), 458 to 481 (DSMNFLFSSNNRFSGEIPKTICEL), 482 to 504 (DNLVMLVLSNNNFSGSIPRCFEN), 506 to 527 (HLYVLHLRNNNLSGIFPEEAIS), 528 to 551 (DRLQSLDVGHNLFSGELPKSLINC), 553 to 574 (ALEFLYVEDNRISDTFPSWLEL), 575 to 601 (LPNFQILVLRSNEFYGPIFSPGDSLSF), 602 to 625 (PRLRIFDISENRFTGVLPSDYFAP), 665 to 689 (FTIYKTIDVSGNRLEGDIPESISLL), 690 to 713 (KELIVLNMSNNAFTGHIPPSLSNL), 714 to 737 (SNLQSLDLSQNRLSGSIPGELGEL), and 739 to 762 (FLARMNFSYNRLEGPIPQTTQIQT). An N-linked (GlcNAc...) asparagine glycan is attached at Asn-207. N-linked (GlcNAc...) asparagine glycosylation is present at Asn-262. Asn-310 carries N-linked (GlcNAc...) asparagine glycosylation. Residues Asn-374 and Asn-384 are each glycosylated (N-linked (GlcNAc...) asparagine). Asn-416 carries N-linked (GlcNAc...) asparagine glycosylation. Asn-493, Asn-516, and Asn-550 each carry an N-linked (GlcNAc...) asparagine glycan. N-linked (GlcNAc...) asparagine glycosylation is found at Asn-696 and Asn-712. Residue Asn-744 is glycosylated (N-linked (GlcNAc...) asparagine). Residues 804–824 (VFSWIAAAIGYVPGVVCGLTI) traverse the membrane as a helical segment. Over 825–844 (GHILVSHKRDWFMRIVSLFT) the chain is Cytoplasmic.

This sequence belongs to the RLP family.

The protein localises to the cell membrane. This is Receptor-like protein 49 from Arabidopsis thaliana (Mouse-ear cress).